We begin with the raw amino-acid sequence, 218 residues long: Protein N-lysine methyltransferase METTL21A (218 aa).

S-adenosyl-L-methionine contacts are provided by residues tryptophan 47, 73–75, aspartate 94, tryptophan 125, and alanine 143; that span reads GAG.

Belongs to the methyltransferase superfamily. METTL21 family. In terms of assembly, interacts with heat shock 70 family members; at least some of these proteins are methylation substrates.

The protein localises to the cytoplasm. It catalyses the reaction L-lysyl-[protein] + 3 S-adenosyl-L-methionine = N(6),N(6),N(6)-trimethyl-L-lysyl-[protein] + 3 S-adenosyl-L-homocysteine + 3 H(+). Functionally, protein-lysine methyltransferase that selectively trimethylates residues in heat shock protein 70 (HSP70) family members. Contributes to the in vivo trimethylation of Lys residues in HSPA1 and HSPA8. In vitro methylates 'Lys-561' in HSPA1, 'Lys-564' in HSPA2, 'Lys-585' in HSPA5, 'Lys-563' in HSPA6 and 'Lys-561' in HSPA8. The sequence is that of Protein N-lysine methyltransferase METTL21A (Mettl21A) from Mus musculus (Mouse).